An 89-amino-acid chain; its full sequence is Small ribosomal subunit protein uS15 (89 aa).

Belongs to the universal ribosomal protein uS15 family. In terms of assembly, part of the 30S ribosomal subunit. Forms a bridge to the 50S subunit in the 70S ribosome, contacting the 23S rRNA.

Its function is as follows. One of the primary rRNA binding proteins, it binds directly to 16S rRNA where it helps nucleate assembly of the platform of the 30S subunit by binding and bridging several RNA helices of the 16S rRNA. Functionally, forms an intersubunit bridge (bridge B4) with the 23S rRNA of the 50S subunit in the ribosome. This Nostoc punctiforme (strain ATCC 29133 / PCC 73102) protein is Small ribosomal subunit protein uS15.